The following is a 275-amino-acid chain: Cell division protein FtsQ (275 aa).

The segment at 1-20 (MRDLHKKKPRPVTQNRLKKP) is disordered. The Cytoplasmic segment spans residues 1–38 (MRDLHKKKPRPVTQNRLKKPPKTCKPINYRGILKKTAK). A helical transmembrane segment spans residues 39–61 (VVGGAALISAVGCAGYGIYRIIA). Topologically, residues 62–275 (GTTFFKLERI…YSDKIIVKKV (214 aa)) are periplasmic. The POTRA domain maps to 66–134 (FKLERIEVSE…NTLSMQIAER (69 aa)).

This sequence belongs to the FtsQ/DivIB family. FtsQ subfamily.

The protein localises to the cell inner membrane. In terms of biological role, essential cell division protein. The chain is Cell division protein FtsQ from Geotalea daltonii (strain DSM 22248 / JCM 15807 / FRC-32) (Geobacter daltonii).